We begin with the raw amino-acid sequence, 131 residues long: Holo-[acyl-carrier-protein] synthase (131 aa).

Mg(2+)-binding residues include Asp-8 and Glu-62.

The protein belongs to the P-Pant transferase superfamily. AcpS family. The cofactor is Mg(2+).

It is found in the cytoplasm. The enzyme catalyses apo-[ACP] + CoA = holo-[ACP] + adenosine 3',5'-bisphosphate + H(+). Functionally, transfers the 4'-phosphopantetheine moiety from coenzyme A to a Ser of acyl-carrier-protein. The sequence is that of Holo-[acyl-carrier-protein] synthase from Delftia acidovorans (strain DSM 14801 / SPH-1).